Consider the following 645-residue polypeptide: Threonine--tRNA ligase (645 aa).

The TGS domain occupies 1–63; it reads MEQINIQFPD…ETDGSIGIVT (63 aa). Residues 242–540 form a catalytic region; the sequence is DHRKIGKELE…LTEETKGAFP (299 aa). Positions 336, 387, and 517 each coordinate Zn(2+).

Belongs to the class-II aminoacyl-tRNA synthetase family. Homodimer. The cofactor is Zn(2+).

The protein resides in the cytoplasm. It carries out the reaction tRNA(Thr) + L-threonine + ATP = L-threonyl-tRNA(Thr) + AMP + diphosphate + H(+). Its function is as follows. Catalyzes the attachment of threonine to tRNA(Thr) in a two-step reaction: L-threonine is first activated by ATP to form Thr-AMP and then transferred to the acceptor end of tRNA(Thr). Also edits incorrectly charged L-seryl-tRNA(Thr). The protein is Threonine--tRNA ligase of Staphylococcus aureus (strain Mu3 / ATCC 700698).